A 220-amino-acid chain; its full sequence is Charged multivesicular body protein 2a (220 aa).

Residues 12 to 53 (EEMLRQNQRALNRAMRDLDRERQRLEQQEKKIIADIKKMAKQ) are a coiled coil. The segment at 184-220 (ATGGSLSVAAGKKAEPQPTLADADADLEERLNNLRRD) is disordered. The MIT-interacting motif signature appears at 208–218 (ADLEERLNNLR). The span at 211-220 (EERLNNLRRD) shows a compositional bias: basic and acidic residues.

Belongs to the SNF7 family. In terms of assembly, probable core component of the endosomal sorting required for transport complex III (ESCRT-III). ESCRT-III components are thought to multimerize to form a flat lattice on the perimeter membrane of the endosome.

Its subcellular location is the late endosome membrane. It is found in the cytoplasm. In terms of biological role, probable core component of the endosomal sorting required for transport complex III (ESCRT-III) which is involved in multivesicular bodies (MVBs) formation and sorting of endosomal cargo proteins into MVBs. MVBs contain intraluminal vesicles (ILVs) that are generated by invagination and scission from the limiting membrane of the endosome and mostly are delivered to lysosomes enabling degradation of membrane proteins, such as stimulated growth factor receptors, lysosomal enzymes and lipids. This is Charged multivesicular body protein 2a (chmp2a) from Danio rerio (Zebrafish).